A 324-amino-acid polypeptide reads, in one-letter code: Beta-ketoacyl-[acyl-carrier-protein] synthase III (324 aa).

Active-site residues include Cys-114 and His-251. Residues 252 to 256 (QANLR) are ACP-binding. The active site involves Asn-281.

This sequence belongs to the thiolase-like superfamily. FabH family. In terms of assembly, homodimer.

It is found in the cytoplasm. It carries out the reaction malonyl-[ACP] + acetyl-CoA + H(+) = 3-oxobutanoyl-[ACP] + CO2 + CoA. Its pathway is lipid metabolism; fatty acid biosynthesis. Functionally, catalyzes the condensation reaction of fatty acid synthesis by the addition to an acyl acceptor of two carbons from malonyl-ACP. Catalyzes the first condensation reaction which initiates fatty acid synthesis and may therefore play a role in governing the total rate of fatty acid production. Possesses both acetoacetyl-ACP synthase and acetyl transacylase activities. Its substrate specificity determines the biosynthesis of branched-chain and/or straight-chain of fatty acids. This is Beta-ketoacyl-[acyl-carrier-protein] synthase III from Rhodobacter capsulatus (Rhodopseudomonas capsulata).